The chain runs to 309 residues: Taste receptor type 2 member 114 (309 aa).

Over 1–7 (MLSTMEG) the chain is Extracellular. A helical transmembrane segment spans residues 8–28 (VLLSVSTSEAVLGIVGNTFIA). At 29–43 (LVNCMDYNRNKKLSN) the chain is on the cytoplasmic side. A helical transmembrane segment spans residues 44 to 64 (IGFILTGLAISRICLVLILIT). Over 65–87 (EAYIKIFYPQLLSPVNIIELISY) the chain is Extracellular. The chain crosses the membrane as a helical span at residues 88 to 108 (LWIIICQLNVWFATSLSIFYF). Residues 109–127 (LKIANFSHYIFVWLKRRID) are Cytoplasmic-facing. A helical transmembrane segment spans residues 128-148 (LVFFFLIGCLLISWLFSFPVV). Residues 149 to 182 (AKMVKDNKMLYINTSWQIHMKKSELIINYVFTNG) are Extracellular-facing. N-linked (GlcNAc...) asparagine glycosylation occurs at Asn-161. Residues 183–203 (GVFLFFMIMLIVCFLLIISLW) form a helical membrane-spanning segment. Topologically, residues 204–233 (RHRRQMESNKLGFRDLNTEVHVRTIKVLLS) are cytoplasmic. Residues 234–254 (FIILFILHFMGITINVICLLI) traverse the membrane as a helical segment. The Extracellular segment spans residues 255–259 (PESNL). Residues 260-280 (LFMFGLTTAFIYPGCHSLILI) traverse the membrane as a helical segment. At 281-309 (LANSRLKQCSVMILQLLKCCENGKELRDT) the chain is on the cytoplasmic side.

The protein belongs to the G-protein coupled receptor T2R family.

It localises to the membrane. Putative taste receptor which may play a role in the perception of bitterness. This Mus musculus (Mouse) protein is Taste receptor type 2 member 114.